Here is a 243-residue protein sequence, read N- to C-terminus: Probable sentrin-specific protease 8 (243 aa).

The segment at 12–185 is protease; that stretch reads SAIYQSDINI…LYVLSIIEEL (174 aa). Catalysis depends on residues His109 and Asp126. Cys174 functions as the Nucleophile in the catalytic mechanism.

Belongs to the peptidase C48 family.

Protease that catalyzes two essential functions in the nedd8 pathway: processing of full-length nedd8 to its mature form and deconjugation of nedd8 from targeted proteins. The protein is Probable sentrin-specific protease 8 (senp8) of Dictyostelium discoideum (Social amoeba).